A 120-amino-acid chain; its full sequence is MFLISKYNYFWLFLLLASLIPPVASPISSYSAPVGKGPEKFTSYESGIEPIGDAWIQFQIRYYMFASVFVISDAETVSLYPWAMCFNELGVPASAEASISVTIPIVGSVYAWRRGASEWS.

The next 3 membrane-spanning stretches (helical) occupy residues 9-29, 64-84, and 89-109; these read YFWL…PISS, MFAS…PWAM, and LGVP…VGSV.

This sequence belongs to the complex I subunit 3 family. In terms of assembly, NDH is composed of at least 16 different subunits, 5 of which are encoded in the nucleus.

Its subcellular location is the plastid. It is found in the chloroplast thylakoid membrane. The catalysed reaction is a plastoquinone + NADH + (n+1) H(+)(in) = a plastoquinol + NAD(+) + n H(+)(out). It carries out the reaction a plastoquinone + NADPH + (n+1) H(+)(in) = a plastoquinol + NADP(+) + n H(+)(out). In terms of biological role, NDH shuttles electrons from NAD(P)H:plastoquinone, via FMN and iron-sulfur (Fe-S) centers, to quinones in the photosynthetic chain and possibly in a chloroplast respiratory chain. The immediate electron acceptor for the enzyme in this species is believed to be plastoquinone. Couples the redox reaction to proton translocation, and thus conserves the redox energy in a proton gradient. The polypeptide is NAD(P)H-quinone oxidoreductase subunit 3, chloroplastic (Huperzia lucidula (Shining clubmoss)).